The primary structure comprises 812 residues: G patch domain-containing protein 1 homolog (812 aa).

Residues 1–42 are disordered; it reads MNRKKLAAYGQEFEDDDEEGSSVSKKPTQIHEEIATDEKGKR. Residues 29–40 are compositionally biased toward basic and acidic residues; that stretch reads QIHEEIATDEKG. Residues 145 to 191 enclose the G-patch domain; that stretch reads SNSIGVRMLRSMGWREGRGIGLANVKQKQKRGGESSEAQFDREQASK. Disordered stretches follow at residues 384–416 and 584–812; these read ANEV…FPDE and NEIE…EEKK. Over residues 586–609 the composition is skewed to basic and acidic residues; sequence IEMRERLLKSRAQRGAEEKKRNQS. 2 stretches are compositionally biased toward acidic residues: residues 610 to 630 and 653 to 668; these read DDDD…ENEA and DGAD…EEAE. A compositionally biased stretch (basic and acidic residues) spans 669 to 720; it reads EKERQEILKKREEDLKRRREIVEKKEEENRKRVEKELKELENRDLLRVSKQQ. The span at 761–794 shows a compositional bias: basic residues; it reads MKKKKKDKKEKEKKKKSKKSKKSKKEKKTKRKHS. Residues 800–812 are compositionally biased toward acidic residues; that stretch reads DSGDNSDGWEEKK.

It belongs to the GPATCH1 family.

In Caenorhabditis elegans, this protein is G patch domain-containing protein 1 homolog.